The primary structure comprises 209 residues: COP9 signalosome complex subunit 8 (209 aa).

The 172-residue stretch at 8–179 folds into the PCI domain; sequence DNAFSFRKLL…GALDVSLNRF (172 aa). Phosphoserine is present on Ser175.

The protein belongs to the CSN8 family. As to quaternary structure, component of the CSN complex, composed of COPS1/GPS1, COPS2, COPS3, COPS4, COPS5, COPS6, COPS7 (COPS7A or COPS7B), COPS8 and COPS9. In the complex, it probably interacts directly with COPS3, COPS4 and COPS7 (COPS7A or COPS7B).

It localises to the cytoplasm. The protein localises to the nucleus. In terms of biological role, component of the COP9 signalosome complex (CSN), a complex involved in various cellular and developmental processes. The CSN complex is an essential regulator of the ubiquitin (Ubl) conjugation pathway by mediating the deneddylation of the cullin subunits of SCF-type E3 ligase complexes, leading to decrease the Ubl ligase activity of SCF-type complexes such as SCF, CSA or DDB2. The complex is also involved in phosphorylation of p53/TP53, c-jun/JUN, IkappaBalpha/NFKBIA, ITPK1 and IRF8/ICSBP, possibly via its association with CK2 and PKD kinases. CSN-dependent phosphorylation of TP53 and JUN promotes and protects degradation by the Ubl system, respectively. The chain is COP9 signalosome complex subunit 8 (Cops8) from Rattus norvegicus (Rat).